Reading from the N-terminus, the 498-residue chain is Glycerol kinase (498 aa).

Threonine 12 is an ADP binding site. Residues threonine 12, threonine 13, and serine 14 each contribute to the ATP site. Residue threonine 12 coordinates sn-glycerol 3-phosphate. Arginine 16 contributes to the ADP binding site. Positions 82, 83, and 134 each coordinate sn-glycerol 3-phosphate. Glycerol contacts are provided by arginine 82, glutamate 83, and tyrosine 134. Histidine 230 carries the post-translational modification Phosphohistidine; by HPr. Aspartate 244 lines the sn-glycerol 3-phosphate pocket. Glycerol-binding residues include aspartate 244 and glutamine 245. Positions 266 and 309 each coordinate ADP. 4 residues coordinate ATP: threonine 266, glycine 309, glutamine 313, and glycine 410. ADP contacts are provided by glycine 410 and asparagine 414.

Belongs to the FGGY kinase family. In terms of assembly, homotetramer and homodimer (in equilibrium). The phosphoenolpyruvate-dependent sugar phosphotransferase system (PTS), including enzyme I, and histidine-containing protein (HPr) are required for the phosphorylation, which leads to the activation of the enzyme.

The enzyme catalyses glycerol + ATP = sn-glycerol 3-phosphate + ADP + H(+). It participates in polyol metabolism; glycerol degradation via glycerol kinase pathway; sn-glycerol 3-phosphate from glycerol: step 1/1. Activated by phosphorylation and inhibited by fructose 1,6-bisphosphate (FBP). Its function is as follows. Key enzyme in the regulation of glycerol uptake and metabolism. Catalyzes the phosphorylation of glycerol to yield sn-glycerol 3-phosphate. This is Glycerol kinase from Staphylococcus aureus (strain MW2).